Consider the following 239-residue polypeptide: tRNA (guanine-N(7)-)-methyltransferase (239 aa).

Residues Glu-69, Glu-94, Asp-121, and Asp-144 each contribute to the S-adenosyl-L-methionine site. Residue Asp-144 is part of the active site. Lys-148 serves as a coordination point for substrate. The tract at residues 150-155 (RHNKRR) is interaction with RNA. Substrate contacts are provided by residues Asp-180 and 217–220 (TKFE).

This sequence belongs to the class I-like SAM-binding methyltransferase superfamily. TrmB family. In terms of assembly, monomer.

It catalyses the reaction guanosine(46) in tRNA + S-adenosyl-L-methionine = N(7)-methylguanosine(46) in tRNA + S-adenosyl-L-homocysteine. The protein operates within tRNA modification; N(7)-methylguanine-tRNA biosynthesis. Its function is as follows. Catalyzes the formation of N(7)-methylguanine at position 46 (m7G46) in tRNA. The chain is tRNA (guanine-N(7)-)-methyltransferase from Yersinia pestis (strain Pestoides F).